The sequence spans 513 residues: MAASRNGFEAVEAEGSAGCRGSSGMEVVLPLDPAVPAPLCPHGPTLLFVKVTQGKEETRRFYACSACRDRKDCNFFQWEDEKLSGARLAAREAHNRRCQPPLSRTQCVERYLKFIELPLTQRKFCQTCQQLLLPDDWGQHSEHQVLGNVSITQLRRPSQLLYPLENKKTNAQYLFADRSCQFLVDLLSALGFRRVLCVGTPRLHELIKLTASGDKKSNIKSLLLDIDFRYSQFYMEDSFCHYNMFNHHFFDGKTALEVCRAFLQEDKGEGIIMVTDPPFGGLVEPLAITFKKLIAMWKEGQSQDDSHKELPIFWIFPYFFESRICQFFPSFQMLDYQVDYDNHALYKHGKTGRKQSPVRIFTNIPPNKIILPTEEGYRFCSPCQRYVSLENQHCELCNSCTSKDGRKWNHCFLCKKCVKPSWIHCSICNHCAVPDHSCEGPKHGCFICGELDHKRSTCPNIATSKRANKAVRKQKQRKSNKMKMETTKGQSMNHTSATRRKKRRERAHQYLGS.

Zn(2+) contacts are provided by Cys40, His42, Cys64, Cys73, Cys125, Cys128, His140, and His143. Residues 40 to 82 (CPHGPTLLFVKVTQGKEETRRFYACSACRDRKDCNFFQWEDEK) form a GRF-type zinc finger. Residues 172 to 175 (QYLF), Arg202, Asp225, 243 to 244 (NM), and Asp276 each bind S-adenosyl-L-methionine. Positions 337 to 357 (QVDYDNHALYKHGKTGRKQSP) are regulatory loop. The Zn(2+) site is built by Cys380, Cys383, His393, Cys394, Cys397, Cys400, His410, Cys411, Cys414, Cys417, His424, Cys425, Cys428, Cys431, His436, and Cys438. The DHHC domain maps to 395 to 447 (ELCNSCTSKDGRKWNHCFLCKKCVKPSWIHCSICNHCAVPDHSCEGPKHGCFI). The segment at 443–460 (HGCFICGELDHKRSTCPN) adopts a CCHC-type zinc-finger fold. A compositionally biased stretch (basic residues) spans 466 to 481 (RANKAVRKQKQRKSNK). The segment at 466-513 (RANKAVRKQKQRKSNKMKMETTKGQSMNHTSATRRKKRRERAHQYLGS) is disordered. A compositionally biased stretch (polar residues) spans 487–496 (TKGQSMNHTS). The segment covering 497 to 506 (ATRRKKRRER) has biased composition (basic residues).

The protein belongs to the ZCCHC4 family. As to quaternary structure, interacts with components of the ASC-1 complex TRIP4, ASCC1, ASCC2 and ASCC3. Interact with AHCYL1 and AHCYL2. Interact with YTHDC2.

It is found in the nucleus. The protein localises to the nucleolus. Its subcellular location is the cytoplasm. The enzyme catalyses adenosine(4220) in 28S rRNA + S-adenosyl-L-methionine = N(6)-methyladenosine(4220) in 28S rRNA + S-adenosyl-L-homocysteine + H(+). RRNA N6-methyltransferase that specifically methylates the adenine in position 4220 of 28S rRNA. N6-methylation of adenine(4220) in 28S rRNA is required for translation. This is rRNA N(6)-adenosine-methyltransferase ZCCHC4 from Homo sapiens (Human).